The following is a 947-amino-acid chain: Receptor-like protein 56 (947 aa).

An N-terminal signal peptide occupies residues 1–27 (MEGKVFSGQKLILVMLLLGHLHGFSSC). Residues 28–899 (IEKERKALLE…EDDKEVAIDM (872 aa)) are Extracellular-facing. Residues Asn-60, Asn-75, and Asn-98 are each glycosylated (N-linked (GlcNAc...) asparagine). 9 LRR repeats span residues 105-128 (FEEVRSLDLSNSRLNGLVDDVEGY), 134-157 (LRNLQILNFSSNEFNNSIFPFLNA), 159-182 (TSLTTLSLRRNNMYGPIPLKELKN), 183-207 (LTNLELLDLSGNRIDGSMPVREFPY), 209-232 (KKLKALDLSSNGIYSSMEWQGLKN), 233-257 (LTNLEVLSLGYNYFDGPIPIEVFCE), 259-281 (KNLQELDLRGINFVGQLPLCFGN), 282-305 (LNKLRFLDLSSNQLTGNIPPSFSS), and 307-330 (ESLEYLSLSDNSFEGFFSLNPLTN). Residues Asn-141, Asn-148, and Asn-182 are each glycosylated (N-linked (GlcNAc...) asparagine). The N-linked (GlcNAc...) asparagine glycan is linked to Asn-232. Residue Asn-330 is glycosylated (N-linked (GlcNAc...) asparagine). The LRR 10; degenerate repeat unit spans residues 332-356 (TKLKVFIFSSKDDMVQVKIESTWQP). LRR repeat units follow at residues 357–380 (LFQLSVLVLRLCSLEKIPNFLMYQ), 381–404 (KNLHVVDLSGNRISGIIPTWLLEN), 405–427 (NPELEVLQLKNNSFTIFQMPTSV), 428–450 (HNLQVLDFSENNIGGLFPDNFGR), 452–476 (LPNLVHMNGSNNGFQGNFPSSMGEM), 477–500 (YNISFLDLSYNNLSGELPQSFVSS), 502–527 (FSLSILQLSHNKFSGHFLPRQTNFTS), 529–549 (IVLRINNNLFTGKIGVGLLTL), 550–575 (VDLCILDMSNNFLEGELPPLLLVFEY), 577–598 (NFLDLSGNLLSGALPSHVSLDN), 600–616 (LFLHNNNFTGPIPDTFL), 617–640 (GSIQILDLRNNKLSGNIPQFVDTQ), 642–663 (ISFLLLRGNSLTGYIPSTLCEF), 664–686 (SKMRLLDLSDNKLNGFIPSCFNN), 757–780 (LNSMYGLDLSSNELSGVIPAELGD), 781–804 (LFKLRALNLSHNFLSSHIPDSFSK), 805–829 (LQDIESLDLSYNMLQGSIPHQLTNL), and 831–854 (SLAIFNVSYNNLSGIIPQGKQFNT). N-linked (GlcNAc...) asparagine glycosylation is present at Asn-415. Asn-459, Asn-478, Asn-488, and Asn-524 each carry an N-linked (GlcNAc...) asparagine glycan. Residue Asn-606 is glycosylated (N-linked (GlcNAc...) asparagine). Asn-686 carries an N-linked (GlcNAc...) asparagine glycan. N-linked (GlcNAc...) asparagine glycosylation is found at Asn-788, Asn-828, Asn-836, and Asn-841. Residues 900–920 (LVFYWSTAGTYVTALIGILVL) form a helical membrane-spanning segment. The Cytoplasmic portion of the chain corresponds to 921-947 (MCVDCSWRRAWLRLVDAFIASAKSKLA).

It belongs to the RLP family.

It localises to the cell membrane. The protein is Receptor-like protein 56 of Arabidopsis thaliana (Mouse-ear cress).